A 636-amino-acid chain; its full sequence is Probable potassium transport system protein Kup (636 aa).

12 consecutive transmembrane segments (helical) span residues 22 to 42 (LGLL…SPLY), 64 to 84 (ILSL…VMFI), 115 to 135 (LMVI…MITP), 150 to 170 (FDGI…ALFL), 182 to 202 (LFGP…VHGI), 220 to 240 (FFVV…LALT), 261 to 281 (WFIL…ALLL), 293 to 313 (LLAP…ATVI), 351 to 371 (IYIG…VIGF), 383 to 403 (VAVT…MLLL), 408 to 428 (PVLA…FFAA), and 433 to 453 (IVQG…LMST).

The protein belongs to the HAK/KUP transporter (TC 2.A.72) family.

It localises to the cell inner membrane. The catalysed reaction is K(+)(in) + H(+)(in) = K(+)(out) + H(+)(out). Transport of potassium into the cell. Likely operates as a K(+):H(+) symporter. This is Probable potassium transport system protein Kup from Pseudomonas putida (strain GB-1).